The following is a 130-amino-acid chain: Small ribosomal subunit protein uS9 (130 aa).

Belongs to the universal ribosomal protein uS9 family.

The sequence is that of Small ribosomal subunit protein uS9 from Shewanella pealeana (strain ATCC 700345 / ANG-SQ1).